Consider the following 136-residue polypeptide: Histone H3 (136 aa).

A disordered region spans residues 1–43 (MARTKQTARKSTGGKAPRKQLATKAARKSAPASGGVKKPHRYR). Lys5 and Lys10 each carry N6,N6,N6-trimethyllysine; alternate. 2 positions are modified to N6,N6-dimethyllysine; alternate: Lys5 and Lys10. Lys5 and Lys10 each carry N6-acetyllysine; alternate. The residue at position 5 (Lys5) is an N6-methyllysine; alternate. Ser11 carries the post-translational modification Phosphoserine. Residues Lys15 and Lys24 each carry the N6-acetyllysine modification. Lys28 bears the N6,N6,N6-trimethyllysine; alternate mark. N6,N6-dimethyllysine; alternate is present on Lys28. The residue at position 28 (Lys28) is an N6-methyllysine; alternate. At Ser29 the chain carries Phosphoserine. Lys37 bears the N6,N6,N6-trimethyllysine; alternate mark. Residue Lys37 is modified to N6,N6-dimethyllysine; alternate. An N6-methyllysine; alternate modification is found at Lys37. The residue at position 80 (Lys80) is an N6-methyllysine.

It belongs to the histone H3 family. As to quaternary structure, the nucleosome is a histone octamer containing two molecules each of H2A, H2B, H3 and H4 assembled in one H3-H4 heterotetramer and two H2A-H2B heterodimers. The octamer wraps approximately 147 bp of DNA. Interacts (via N-terminal tail mono-acetylated on Lys-15) with swsn-4 (via Bromo domain); the interaction is direct. Phosphorylated at Ser-11 and Ser-29 during M phase. Phosphorylation of Ser-11 requires air-2 but not air-1. Dephosphorylated by gsp-1 and/or gsp-2 during chromosome segregation. In terms of processing, acetylation is generally linked to gene activation. Post-translationally, methylation at Lys-5 is linked to gene activation and is absent from male inactive X chromosome chromatin. Methylation at Lys-10 is linked to gene repression and is enriched in male inactive X chromosome chromatin. Methylation at Lys-37 occurs on the entire length of autosomes during meiotic prophase. Trimethylation at Lys-10 and Lys-37 is specifically antagonized by jmjd-2. Dimethylation and trimethylation at Lys-28 occurs in all nuclei. The mes-2-mes-3-mes-6 complex may be responsible for Lys-28 methylation in most of the germline and in the early embryo.

It localises to the nucleus. It is found in the chromosome. Functionally, core component of nucleosome. Nucleosomes wrap and compact DNA into chromatin, limiting DNA accessibility to the cellular machineries which require DNA as a template. Histones thereby play a central role in transcription regulation, DNA repair, DNA replication and chromosomal stability. DNA accessibility is regulated via a complex set of post-translational modifications of histones, also called histone code, and nucleosome remodeling. This chain is Histone H3 (his-2), found in Caenorhabditis elegans.